A 354-amino-acid polypeptide reads, in one-letter code: Homeobox protein Nkx-2.4 (354 aa).

Positions 188–247 form a DNA-binding region, homeobox; sequence RRKRRVLFSQAQVYELERRFKQQKYLSAPEREHLASMIHLTPTQVKIWFQNHRYKMKRQA. A disordered region spans residues 245–329; sequence RQAKDKAAQQ…PALHGPGGGL (85 aa). Over residues 262-272 the composition is skewed to pro residues; it reads GPPPPPPPPSP. The segment covering 290–304 has biased composition (low complexity); it reads GAGTPTPGQGGQQPQ.

It belongs to the NK-2 homeobox family. In the embryo it is detected in the posterior hypothalamus and later in the head. In the adult it is detected only in testis.

The protein resides in the nucleus. Its function is as follows. Probable transcription factor. This is Homeobox protein Nkx-2.4 (Nkx2-4) from Mus musculus (Mouse).